The following is a 494-amino-acid chain: 3-octaprenyl-4-hydroxybenzoate carboxy-lyase (494 aa).

A Mn(2+)-binding site is contributed by Asn172. Prenylated FMN-binding positions include 175 to 177, 189 to 191, and 194 to 195; these read IYR, RWL, and RG. Glu238 contributes to the Mn(2+) binding site. Asp287 functions as the Proton donor in the catalytic mechanism.

This sequence belongs to the UbiD family. In terms of assembly, homohexamer. Prenylated FMN serves as cofactor. It depends on Mn(2+) as a cofactor.

The protein resides in the cell membrane. It catalyses the reaction a 4-hydroxy-3-(all-trans-polyprenyl)benzoate + H(+) = a 2-(all-trans-polyprenyl)phenol + CO2. It participates in cofactor biosynthesis; ubiquinone biosynthesis. Functionally, catalyzes the decarboxylation of 3-octaprenyl-4-hydroxy benzoate to 2-octaprenylphenol, an intermediate step in ubiquinone biosynthesis. In Cronobacter sakazakii (strain ATCC BAA-894) (Enterobacter sakazakii), this protein is 3-octaprenyl-4-hydroxybenzoate carboxy-lyase.